The chain runs to 120 residues: Myohemerythrin (120 aa).

Residues histidine 26, histidine 56, glutamate 60, histidine 75, histidine 79, histidine 108, and aspartate 113 each contribute to the Fe cation site.

Belongs to the hemerythrin family. In terms of assembly, monomer.

The protein resides in the cytoplasm. Myohemerythrin is an oxygen-binding protein found in the retractor muscles of certain worms. The oxygen-binding site contains two iron atoms. The polypeptide is Myohemerythrin (Theromyzon tessulatum (Duck leech)).